The sequence spans 476 residues: Ureidoglycolate hydrolase (476 aa).

An N-terminal signal peptide occupies residues 1–25; it reads MESLKRFLCSIALLLISLLLPSSLA. H138, D149, E184, and H254 together coordinate Mn(2+). Substrate contacts are provided by residues 183–184, 254–257, H290, N340, R353, 423–424, and H448; these read EE, HIEQ, and YH. The involved in dimerization stretch occupies residues 276-391; it reads APASLKVEFE…LSEFKIVNQD (116 aa). H448 provides a ligand contact to Mn(2+).

Belongs to the peptidase M20 family. In terms of assembly, homodimer. Mn(2+) serves as cofactor. The cofactor is Ni(2+). Requires Co(2+) as cofactor.

The protein localises to the endoplasmic reticulum. It carries out the reaction (S)-ureidoglycolate + H2O + 2 H(+) = glyoxylate + 2 NH4(+) + CO2. It participates in nitrogen metabolism; (S)-allantoin degradation; glyoxylate from (S)-ureidoglycolate: step 1/1. In terms of biological role, involved in the catabolism of purine nucleotides. Can use (S)-ureidoglycolate as substrate, but not (R)-ureidoglycolate or allantoate. The sequential activity of AAH, UGLYAH and UAH allows a complete purine breakdown without the intermediate generation of urea. The chain is Ureidoglycolate hydrolase from Arabidopsis thaliana (Mouse-ear cress).